Consider the following 277-residue polypeptide: Diaminopimelate epimerase (277 aa).

Substrate contacts are provided by N15, Q48, and N66. The Proton donor role is filled by C75. Substrate is bound by residues G76–N77, N156, N189, and E207–R208. C216 acts as the Proton acceptor in catalysis. G217–S218 contributes to the substrate binding site.

It belongs to the diaminopimelate epimerase family. In terms of assembly, homodimer.

It localises to the cytoplasm. The catalysed reaction is (2S,6S)-2,6-diaminopimelate = meso-2,6-diaminopimelate. It functions in the pathway amino-acid biosynthesis; L-lysine biosynthesis via DAP pathway; DL-2,6-diaminopimelate from LL-2,6-diaminopimelate: step 1/1. Its function is as follows. Catalyzes the stereoinversion of LL-2,6-diaminopimelate (L,L-DAP) to meso-diaminopimelate (meso-DAP), a precursor of L-lysine and an essential component of the bacterial peptidoglycan. The protein is Diaminopimelate epimerase of Acidiphilium cryptum (strain JF-5).